Here is a 518-residue protein sequence, read N- to C-terminus: MQNLPKWKIVLSIICTVFAIICALPNFIQINWKFLPHDSVNLGLDLRGGANLLLDVDFDTYLNDSMENIADTLRKNFREHKIGYKNLLVRHNNIQLEVRSTEVLKSLKKIIHKIDPEIIIEVNKNKIKLRYSESRLNDLLNKVVEQSIEIVRMRIDSTGTKEPILQRQGNKHILLQVPGVDNPSYLKNILGKTAKLTFHLVDENANIEEAIKGHIPLDSMLIKGDSEHHGEYYIVIKKKVLLSGTHLTKASASFDQNSQPMVAFSFNNLGSKIFTEITKNNTGKRLAIVLDNKLLSAPMINGAIIGGDGIITGNFTIESANELALLLRVGSLPTPLKIIEERSIGPNLGADSIESGKKAGLIGFTAVCIFMILSYGVIGLFANIALILALLYILALLSLFQATLTLPGIAGIILTMGMAVDANVLIYERIKEELHKGVSNLYAIRTGFESAFATIIDSNLTTLIVAFALYIFGVGAIKGFAVALTIGIISSMFSAIIITKLLIDIWVKYFKPEKLGLL.

The next 6 membrane-spanning stretches (helical) occupy residues 9–29, 356–376, 377–397, 406–426, 451–473, and 486–506; these read IVLS…NFIQ, GKKA…LSYG, VIGL…LALL, LPGI…NVLI, AFAT…YIFG, and IGII…IDIW.

It belongs to the SecD/SecF family. SecD subfamily. As to quaternary structure, forms a complex with SecF. Part of the essential Sec protein translocation apparatus which comprises SecA, SecYEG and auxiliary proteins SecDF-YajC and YidC.

The protein localises to the cell inner membrane. Functionally, part of the Sec protein translocase complex. Interacts with the SecYEG preprotein conducting channel. SecDF uses the proton motive force (PMF) to complete protein translocation after the ATP-dependent function of SecA. The sequence is that of Protein translocase subunit SecD from Rickettsia typhi (strain ATCC VR-144 / Wilmington).